The chain runs to 1214 residues: Formin-D (1214 aa).

The 370-residue stretch at 10-379 folds into the GBD/FH3 domain; it reads KKEESPQSID…KMNNGESYLD (370 aa). A coiled-coil region spans residues 401-448; it reads SGEKAVLIQKEIEDLKKQKKRDQDKLAEKDKLLTKLAKRMRKMEEAIK. An FH1 domain is found at 457-544; that stretch reads NNQIEIESPP…GSGDGIPLPP (88 aa). 2 stretches are compositionally biased toward polar residues: residues 462–479 and 518–534; these read IESPPDSSTSTPQETTPG and LDTTNQQGSTDASQTEA. Disordered regions lie at residues 462–490, 507–569, 868–948, 1026–1045, 1054–1089, and 1133–1214; these read IESPPDSSTSTPQETTPGGTKVPLKTSPV, APNG…SRPP, PKSV…PLKD, DKSTQRKNEKERKEMEIKKS, LKKIGSPSSSNRILASNESSPTSSTSSVVHQHDDED, and MNLQ…EGEN. Residues 541–554 are compositionally biased toward pro residues; it reads PLPPGAPPPPPPPG. The 476-residue stretch at 562–1037 folds into the FH2 domain; the sequence is PQLCSRPPSI…STQRKNEKER (476 aa). The span at 868–877 shows a compositional bias: basic and acidic residues; sequence PKSVEPKPDD. The span at 930–940 shows a compositional bias: polar residues; that stretch reads QVNTNSTSDSK. Residues 1019–1056 are a coiled coil; the sequence is EIEKSIKDKSTQRKNEKERKEMEIKKSKLEMIHSKLKK. Over residues 1059–1071 the composition is skewed to polar residues; that stretch reads SPSSSNRILASNE. The region spanning 1065–1095 is the DAD domain; it reads RILASNESSPTSSTSSVVHQHDDEDEETIKE. Residues 1161 to 1171 are compositionally biased toward low complexity; the sequence is SSTYSSISSIY. The span at 1174 to 1214 shows a compositional bias: acidic residues; it reads EPLDMSDQEDEDEEEEEDEEEEEEEEEGDDDNDNDEEEGEN. Residues 1176-1207 adopt a coiled-coil conformation; that stretch reads LDMSDQEDEDEEEEEDEEEEEEEEEGDDDNDN.

This sequence belongs to the formin homology family. Diaphanous subfamily. Interacts (via GBD/FH3 domain) with activated Rho-GTPases.

Its function is as follows. Formins play an important role in the nucleation of actin and the formation of linear actin filaments. The chain is Formin-D (forD) from Dictyostelium discoideum (Social amoeba).